The sequence spans 193 residues: Protein GrpE (193 aa).

The segment covering Met1 to Ala22 has biased composition (basic and acidic residues). A disordered region spans residues Met1–Lys45. Positions Glu23–Glu32 are enriched in acidic residues.

This sequence belongs to the GrpE family. Homodimer.

It localises to the cytoplasm. Participates actively in the response to hyperosmotic and heat shock by preventing the aggregation of stress-denatured proteins, in association with DnaK and GrpE. It is the nucleotide exchange factor for DnaK and may function as a thermosensor. Unfolded proteins bind initially to DnaJ; upon interaction with the DnaJ-bound protein, DnaK hydrolyzes its bound ATP, resulting in the formation of a stable complex. GrpE releases ADP from DnaK; ATP binding to DnaK triggers the release of the substrate protein, thus completing the reaction cycle. Several rounds of ATP-dependent interactions between DnaJ, DnaK and GrpE are required for fully efficient folding. This is Protein GrpE from Bacteroides thetaiotaomicron (strain ATCC 29148 / DSM 2079 / JCM 5827 / CCUG 10774 / NCTC 10582 / VPI-5482 / E50).